The chain runs to 473 residues: Adenosylhomocysteinase (473 aa).

Substrate-binding residues include T64, D139, and E199. An NAD(+)-binding site is contributed by 200-202; that stretch reads TTT. Residues K229 and D233 each coordinate substrate. NAD(+) contacts are provided by residues N234, 263–268, E286, N321, 342–344, and N387; these read GYGDVG and IGH.

This sequence belongs to the adenosylhomocysteinase family. NAD(+) is required as a cofactor.

The protein localises to the cytoplasm. It carries out the reaction S-adenosyl-L-homocysteine + H2O = L-homocysteine + adenosine. Its pathway is amino-acid biosynthesis; L-homocysteine biosynthesis; L-homocysteine from S-adenosyl-L-homocysteine: step 1/1. In terms of biological role, may play a key role in the regulation of the intracellular concentration of adenosylhomocysteine. This is Adenosylhomocysteinase from Paraburkholderia phymatum (strain DSM 17167 / CIP 108236 / LMG 21445 / STM815) (Burkholderia phymatum).